Here is a 126-residue protein sequence, read N- to C-terminus: Methylglyoxal synthase (126 aa).

An MGS-like domain is found at 1-126 (MAGSKCLALI…AIKLLPTLEA (126 aa)). Residues His12, Lys16, 38–41 (TGTT), and 59–60 (SG) contribute to the substrate site. The active-site Proton donor/acceptor is the Asp65. Position 92 (His92) interacts with substrate.

Belongs to the methylglyoxal synthase family.

It carries out the reaction dihydroxyacetone phosphate = methylglyoxal + phosphate. In terms of biological role, catalyzes the formation of methylglyoxal from dihydroxyacetone phosphate. This is Methylglyoxal synthase from Rhizobium etli (strain ATCC 51251 / DSM 11541 / JCM 21823 / NBRC 15573 / CFN 42).